The primary structure comprises 438 residues: Methylenetetrahydrofolate--tRNA-(uracil-5-)-methyltransferase TrmFO (438 aa).

7 to 12 (GAGLAG) serves as a coordination point for FAD.

This sequence belongs to the MnmG family. TrmFO subfamily. It depends on FAD as a cofactor.

The protein resides in the cytoplasm. The enzyme catalyses uridine(54) in tRNA + (6R)-5,10-methylene-5,6,7,8-tetrahydrofolate + NADH + H(+) = 5-methyluridine(54) in tRNA + (6S)-5,6,7,8-tetrahydrofolate + NAD(+). It catalyses the reaction uridine(54) in tRNA + (6R)-5,10-methylene-5,6,7,8-tetrahydrofolate + NADPH + H(+) = 5-methyluridine(54) in tRNA + (6S)-5,6,7,8-tetrahydrofolate + NADP(+). Catalyzes the folate-dependent formation of 5-methyl-uridine at position 54 (M-5-U54) in all tRNAs. This Sulfurihydrogenibium sp. (strain YO3AOP1) protein is Methylenetetrahydrofolate--tRNA-(uracil-5-)-methyltransferase TrmFO.